The chain runs to 247 residues: PABIR family member 2 (247 aa).

Residues 1–23 (MAQEKMELDLEPDTSYGGTLRRS) form a disordered region. A2 is subject to N-acetylalanine. A phosphoserine mark is found at S25, S33, S50, S58, and L63. The segment at 82-104 (ISQSWDESLSLSDSDFDKPEKLY) is disordered. Positions 83-94 (SQSWDESLSLSD) are enriched in low complexity. The residue at position 112 (T112) is a Phosphothreonine. A phosphoserine mark is found at S115 and S119. Position 122 is an omega-N-methylarginine (R122). Disordered stretches follow at residues 129–152 (VSSSGLPPSPVPSPRRFSRRSQSP), 158–177 (PSVLGPLKRKGEMETESQPK), and 202–230 (DILDGSSSSSGLSSDPLAKGSATAESPVA). A phosphoserine mark is found at S137 and S141. The segment covering 166–176 (RKGEMETESQP) has biased composition (basic and acidic residues). Positions 202–216 (DILDGSSSSSGLSSD) are enriched in low complexity.

It belongs to the FAM122 family. Isoform 3 and isoform 4 are phosphorylated on Ser-62 and Ser-64.

The protein is PABIR family member 2 of Homo sapiens (Human).